A 679-amino-acid chain; its full sequence is MTQVAKKILVTCALPYANGSIHLGHMLEHIQADIWVRYQRMRGHQIYFICADDAHGTPIMLKAQQLGIAPEEMINEMNLEHQTDFAGFGISYDNYHSTHSEENQQLSTLIYQRLKENGFIKSRTISQLFDPEKVMFLPDRFVKGSCPKCHSPDQYGDNCEVCGATYNPTDLINPKSAVSGTTPVMRESEHFFFDLPAFSEMMRAWTRSGALQEQVANKMQEWFESGLQEWDISRDAPYFGFEVPDAPGKYFYVWLDAPIGYMSAFQNLCQKRSDLRFDEFWDVDSKADLYHFIGKDIVYFHSLFWPAMLEGSHFRKPTNLFVHGYVTVNGAKMSKSRGTFIKASTYLAHLDAECLRYYYAAKLSSRIDDIDLNLEDFIQRVNADIVNKVVNLASRNAGFINKRFDGQLAATVADPALYATFVNAATSIGDAFSSRETSRAIREIMALADLANRYVDEQAPWVVAKQEGREADLQAICSMGIQLFRVLMTYLKPVLPSLAERAKAFLATPLDWDDLSAPLLSHRIRPFKALFSRIEAAQVDAVIEVSRLEAAAAGEPAAAPAGALAEAPIAPTINFDDFAKVDMRVALIKRAESVKGSDKLLKLTLDLGGTSRQVFSGIRAAYPDPQVLEGRLTIMVANLAPRKMRFGISEGMVMAAGPGGKDIFLLSPDAGALPGMPVK.

Positions 15 to 25 match the 'HIGH' region motif; it reads PYANGSIHLGH. Zn(2+) is bound by residues Cys-146, Cys-149, Cys-159, and Cys-162. The 'KMSKS' region motif lies at 332–336; that stretch reads KMSKS. Lys-335 is a binding site for ATP. Positions 577–679 constitute a tRNA-binding domain; that stretch reads DFAKVDMRVA…AGALPGMPVK (103 aa).

The protein belongs to the class-I aminoacyl-tRNA synthetase family. MetG type 1 subfamily. As to quaternary structure, homodimer. It depends on Zn(2+) as a cofactor.

The protein resides in the cytoplasm. The catalysed reaction is tRNA(Met) + L-methionine + ATP = L-methionyl-tRNA(Met) + AMP + diphosphate. In terms of biological role, is required not only for elongation of protein synthesis but also for the initiation of all mRNA translation through initiator tRNA(fMet) aminoacylation. This chain is Methionine--tRNA ligase, found in Sodalis glossinidius (strain morsitans).